The chain runs to 265 residues: NAD kinase (265 aa).

D45 functions as the Proton acceptor in the catalytic mechanism. NAD(+)-binding positions include 45–46 (DG), 122–123 (NE), R148, D150, 161–166 (TAYNKS), A185, and Q223.

Belongs to the NAD kinase family. A divalent metal cation is required as a cofactor.

Its subcellular location is the cytoplasm. It catalyses the reaction NAD(+) + ATP = ADP + NADP(+) + H(+). In terms of biological role, involved in the regulation of the intracellular balance of NAD and NADP, and is a key enzyme in the biosynthesis of NADP. Catalyzes specifically the phosphorylation on 2'-hydroxyl of the adenosine moiety of NAD to yield NADP. The sequence is that of NAD kinase from Enterococcus faecalis (strain ATCC 700802 / V583).